The following is a 316-amino-acid chain: HPr kinase/phosphorylase (316 aa).

Catalysis depends on residues histidine 141 and lysine 162. 156–163 (GESGVGKS) contacts ATP. Serine 163 contributes to the Mg(2+) binding site. The Proton acceptor; for phosphorylation activity. Proton donor; for dephosphorylation activity role is filled by aspartate 180. Positions 204-213 (MEIRGIGIID) are important for the catalytic mechanism of both phosphorylation and dephosphorylation. Glutamate 205 is a binding site for Mg(2+). The active site involves arginine 246. The important for the catalytic mechanism of dephosphorylation stretch occupies residues 267-272 (PVKVGR).

It belongs to the HPrK/P family. As to quaternary structure, homohexamer. Requires Mg(2+) as cofactor.

The enzyme catalyses [HPr protein]-L-serine + ATP = [HPr protein]-O-phospho-L-serine + ADP + H(+). It carries out the reaction [HPr protein]-O-phospho-L-serine + phosphate + H(+) = [HPr protein]-L-serine + diphosphate. In terms of biological role, catalyzes the ATP- as well as the pyrophosphate-dependent phosphorylation of a specific serine residue in HPr, a phosphocarrier protein of the phosphoenolpyruvate-dependent sugar phosphotransferase system (PTS). HprK/P also catalyzes the pyrophosphate-producing, inorganic phosphate-dependent dephosphorylation (phosphorolysis) of seryl-phosphorylated HPr (P-Ser-HPr). The two antagonistic activities of HprK/P are regulated by several intracellular metabolites, which change their concentration in response to the absence or presence of rapidly metabolisable carbon sources (glucose, fructose, etc.) in the growth medium. Therefore, by controlling the phosphorylation state of HPr, HPrK/P is a sensor enzyme that plays a major role in the regulation of carbon metabolism and sugar transport: it mediates carbon catabolite repression (CCR), and regulates PTS-catalyzed carbohydrate uptake and inducer exclusion. The sequence is that of HPr kinase/phosphorylase from Lactobacillus delbrueckii subsp. bulgaricus (strain ATCC 11842 / DSM 20081 / BCRC 10696 / JCM 1002 / NBRC 13953 / NCIMB 11778 / NCTC 12712 / WDCM 00102 / Lb 14).